The primary structure comprises 504 residues: Putative ribose/galactose/methyl galactoside import ATP-binding protein (504 aa).

ABC transporter domains are found at residues 5–242 and 252–497; these read ISVK…GRNL and TSAN…TRRE. Position 37-44 (37-44) interacts with ATP; the sequence is GENGAGKS.

It belongs to the ABC transporter superfamily. Carbohydrate importer 2 (CUT2) (TC 3.A.1.2) family.

The protein localises to the cell inner membrane. It catalyses the reaction D-ribose(out) + ATP + H2O = D-ribose(in) + ADP + phosphate + H(+). It carries out the reaction D-galactose(out) + ATP + H2O = D-galactose(in) + ADP + phosphate + H(+). Part of an ABC transporter complex involved in carbohydrate import. Could be involved in ribose, galactose and/or methyl galactoside import. Responsible for energy coupling to the transport system. The protein is Putative ribose/galactose/methyl galactoside import ATP-binding protein of Albidiferax ferrireducens (strain ATCC BAA-621 / DSM 15236 / T118) (Rhodoferax ferrireducens).